Here is a 544-residue protein sequence, read N- to C-terminus: Chaperonin GroEL (544 aa).

ATP-binding positions include 30–33 (TLGP), Lys-51, 87–91 (DGTTT), Gly-415, 481–483 (DAL), and Asp-497.

This sequence belongs to the chaperonin (HSP60) family. As to quaternary structure, forms a cylinder of 14 subunits composed of two heptameric rings stacked back-to-back. Interacts with the co-chaperonin GroES.

The protein localises to the cytoplasm. It carries out the reaction ATP + H2O + a folded polypeptide = ADP + phosphate + an unfolded polypeptide.. In terms of biological role, together with its co-chaperonin GroES, plays an essential role in assisting protein folding. The GroEL-GroES system forms a nano-cage that allows encapsulation of the non-native substrate proteins and provides a physical environment optimized to promote and accelerate protein folding. The polypeptide is Chaperonin GroEL (Chlamydia trachomatis serovar L2 (strain ATCC VR-902B / DSM 19102 / 434/Bu)).